The primary structure comprises 841 residues: Serine/threonine-protein kinase/endoribonuclease IRE1a (841 aa).

Residues 1-30 (MPPRCPFLRHLFFLLLLLSPWIMSPCGGAA) form the signal peptide. At 31–323 (DDVTYPIVPS…KQKYTYLFGQ (293 aa)) the chain is on the lumenal side. Asn-100, Asn-104, Asn-119, Asn-132, and Asn-221 each carry an N-linked (GlcNAc...) asparagine glycan. The chain crosses the membrane as a helical span at residues 324 to 344 (WSPVKLLAPLVLLGVVVSVFI). Topologically, residues 345-841 (KKFSSRGSDV…FRKYFKCDII (497 aa)) are cytoplasmic. A disordered region spans residues 352–382 (SDVSLKAGPSKKKKNRKSAKDTNRQSVPRGQ). Positions 414–704 (FLSSKEIAKG…ATEVLLHPMF (291 aa)) constitute a Protein kinase domain. ATP is bound by residues 420–428 (IAKGSNGTV) and Lys-442. Asp-570 (proton acceptor) is an active-site residue. In terms of domain architecture, KEN spans 707–838 (SEMRLSFLRD…EEVFRKYFKC (132 aa)).

This sequence belongs to the protein kinase superfamily. Ser/Thr protein kinase family. As to quaternary structure, homodimer; disulfide-linked. Dimer formation is driven by hydrophobic interactions within the N-terminal luminal domains and stabilized by disulfide bridges. Mg(2+) is required as a cofactor. Post-translationally, autophosphorylated. Ubiquitous. Detected in the vascular bundles of young plants, leaves, roots, seedlings and in the receptacles of flowers and vascular bundles of the petals.

The protein localises to the endoplasmic reticulum membrane. The catalysed reaction is L-seryl-[protein] + ATP = O-phospho-L-seryl-[protein] + ADP + H(+). It catalyses the reaction L-threonyl-[protein] + ATP = O-phospho-L-threonyl-[protein] + ADP + H(+). Its activity is regulated as follows. The kinase domain is activated by trans-autophosphorylation. Kinase activity is required for activation of the endoribonuclease domain. Its function is as follows. Senses unfolded proteins in the lumen of the endoplasmic reticulum via its N-terminal domain which leads to enzyme auto-activation. The active endoribonuclease domain splices bZIP60 mRNA to generate a new C-terminus, converting it into a potent unfolded-protein response transcriptional activator which then induces transcription of UPR target genes. Involved in organ growth regulation. Plays a role in plant immunity and abiotic stress responses. The protein is Serine/threonine-protein kinase/endoribonuclease IRE1a (IRE1A) of Arabidopsis thaliana (Mouse-ear cress).